The primary structure comprises 565 residues: Putative pentatricopeptide repeat-containing protein At3g05240 (565 aa).

PPR repeat units lie at residues 37–70 (NVIP…IDCP), 71–105 (SVYI…GYSP), 106–140 (DYFT…GFEV), 141–171 (NMYV…IPQW), 172–206 (NVVA…GVKA), 207–241 (NETI…GFDP), 250–280 (NVIL…MPER), 281–315 (TLVS…GIAP), 316–350 (DKVT…GFVK), 351–381 (DAAI…LEKK), 382–416 (DTIA…GNAT), 418–448 (DGIT…MRDL), and 454–484 (TVEH…MPVK). The type E motif stretch occupies residues 489–564 (IWGALLNGCD…VLGHSSVETM (76 aa)).

This sequence belongs to the PPR family. PCMP-E subfamily.

The chain is Putative pentatricopeptide repeat-containing protein At3g05240 (PCMP-E82) from Arabidopsis thaliana (Mouse-ear cress).